A 316-amino-acid chain; its full sequence is MEREEFVEFVERILRRIGFKTLKLNFRGGCFNLVATRSLLLLFIKALANIDKFSEEQAEDLKRLAKLFKASPILVGLRTKNYEMEDGIVYERFGIYAVTPGTLYSMFAEGEPPLIMAERGGFYVRIDGKRLKDLREKHGYSLSELANILGVSRKSLQRYEKGDSMVTLEVALRLEEVFDEALVKPINVLKAKFDEISLSSKPETTLEREVFERLERIGMEVVKVKTAPFNAITTEEEDNIELLTGIDEKKTEKTLRRAELVSQMAEIVGSEGMFVLKRARIEVVNKVPILPTRVLEEVRDADELLEIINELKEAKS.

One can recognise an HTH cro/C1-type domain in the interval 131 to 189; the sequence is LKDLREKHGYSLSELANILGVSRKSLQRYEKGDSMVTLEVALRLEEVFDEALVKPINVL. Positions 142–161 form a DNA-binding region, H-T-H motif; that stretch reads LSELANILGVSRKSLQRYEK.

This Pyrococcus abyssi (strain GE5 / Orsay) protein is Putative HTH-type transcriptional regulatory protein PYRAB03670.